A 289-amino-acid polypeptide reads, in one-letter code: Eukaryotic translation initiation factor 3 subunit F (289 aa).

Positions 7–137 constitute an MPN domain; sequence VKVHPVVLFQ…LRAYVCVPLG (131 aa).

It belongs to the eIF-3 subunit F family. Component of the eukaryotic translation initiation factor 3 (eIF-3) complex.

The protein localises to the cytoplasm. Functionally, component of the eukaryotic translation initiation factor 3 (eIF-3) complex, which is involved in protein synthesis of a specialized repertoire of mRNAs and, together with other initiation factors, stimulates binding of mRNA and methionyl-tRNAi to the 40S ribosome. The eIF-3 complex specifically targets and initiates translation of a subset of mRNAs involved in cell proliferation. This chain is Eukaryotic translation initiation factor 3 subunit F, found in Bombyx mori (Silk moth).